The chain runs to 267 residues: Heme-containing CO-sensing transcriptional regulator RcoM 2 (267 aa).

Residues 15 to 86 (RAETFQHKLE…KSRDKLRFLL (72 aa)) enclose the PAS domain. Residues His-74 and Met-104 each contribute to the heme site. One can recognise an HTH LytTR-type domain in the interval 161–266 (IPVYRKSRVI…TAQLKELLGV (106 aa)).

Heme serves as cofactor.

The protein localises to the cytoplasm. In terms of biological role, one-component, b-type heme-containing aerobic sensor and transcriptional regulator that responds to CO by activating the expression of the oxidation operon cox. This chain is Heme-containing CO-sensing transcriptional regulator RcoM 2 (rcoM2), found in Paraburkholderia xenovorans (strain LB400).